The primary structure comprises 207 residues: Large ribosomal subunit protein uL4 (207 aa).

A disordered region spans residues 47–77 (GTADTKTRAEVSGGGRKPWRQKGTGRARHGS). The segment covering 63-77 (KPWRQKGTGRARHGS) has biased composition (basic residues).

This sequence belongs to the universal ribosomal protein uL4 family. As to quaternary structure, part of the 50S ribosomal subunit.

In terms of biological role, one of the primary rRNA binding proteins, this protein initially binds near the 5'-end of the 23S rRNA. It is important during the early stages of 50S assembly. It makes multiple contacts with different domains of the 23S rRNA in the assembled 50S subunit and ribosome. Its function is as follows. Forms part of the polypeptide exit tunnel. In Symbiobacterium thermophilum (strain DSM 24528 / JCM 14929 / IAM 14863 / T), this protein is Large ribosomal subunit protein uL4.